The sequence spans 871 residues: Translation initiation factor IF-2 (871 aa).

2 disordered regions span residues 60 to 101 (KKNI…QEVK) and 184 to 203 (ESLK…KKES). Basic residues predominate over residues 61–72 (KNIKTPTAKKPK). The segment covering 73 to 101 (KENIKEQEKLNESEKKEPKKEEKLKQEVK) has biased composition (basic and acidic residues). Residues 370 to 537 (TRAPVITIMG…IVLLQADILE (168 aa)) enclose the tr-type G domain. A G1 region spans residues 379–386 (GHVDHGKT). 379–386 (GHVDHGKT) is a binding site for GTP. Positions 404-408 (GITQH) are G2. Residues 425–428 (DTPG) are G3. GTP is bound by residues 425 to 429 (DTPGH) and 479 to 482 (NKMD). The interval 479–482 (NKMD) is G4. A G5 region spans residues 515-517 (SAK).

It belongs to the TRAFAC class translation factor GTPase superfamily. Classic translation factor GTPase family. IF-2 subfamily.

The protein localises to the cytoplasm. Functionally, one of the essential components for the initiation of protein synthesis. Protects formylmethionyl-tRNA from spontaneous hydrolysis and promotes its binding to the 30S ribosomal subunits. Also involved in the hydrolysis of GTP during the formation of the 70S ribosomal complex. The polypeptide is Translation initiation factor IF-2 (Campylobacter jejuni (strain RM1221)).